Reading from the N-terminus, the 452-residue chain is Probable glycine dehydrogenase (decarboxylating) subunit 1 (452 aa).

This sequence belongs to the GcvP family. N-terminal subunit subfamily. In terms of assembly, the glycine cleavage system is composed of four proteins: P, T, L and H. In this organism, the P 'protein' is a heterodimer of two subunits.

The enzyme catalyses N(6)-[(R)-lipoyl]-L-lysyl-[glycine-cleavage complex H protein] + glycine + H(+) = N(6)-[(R)-S(8)-aminomethyldihydrolipoyl]-L-lysyl-[glycine-cleavage complex H protein] + CO2. The glycine cleavage system catalyzes the degradation of glycine. The P protein binds the alpha-amino group of glycine through its pyridoxal phosphate cofactor; CO(2) is released and the remaining methylamine moiety is then transferred to the lipoamide cofactor of the H protein. This is Probable glycine dehydrogenase (decarboxylating) subunit 1 from Novosphingobium aromaticivorans (strain ATCC 700278 / DSM 12444 / CCUG 56034 / CIP 105152 / NBRC 16084 / F199).